The chain runs to 287 residues: Elongation factor Ts (287 aa).

An involved in Mg(2+) ion dislocation from EF-Tu region spans residues 80 to 83 (TDFL).

Belongs to the EF-Ts family.

The protein localises to the cytoplasm. Its function is as follows. Associates with the EF-Tu.GDP complex and induces the exchange of GDP to GTP. It remains bound to the aminoacyl-tRNA.EF-Tu.GTP complex up to the GTP hydrolysis stage on the ribosome. The polypeptide is Elongation factor Ts (Pseudomonas savastanoi pv. phaseolicola (strain 1448A / Race 6) (Pseudomonas syringae pv. phaseolicola (strain 1448A / Race 6))).